Reading from the N-terminus, the 229-residue chain is Non-structural protein P8 (229 aa).

2 helical membrane-spanning segments follow: residues 119-139 (IIHM…VCTL) and 162-182 (SLNP…MVCA).

This sequence belongs to the orbivirus NS3 family. As to quaternary structure, forms homooligomers via coiled-coil motif. Interacts with host OPTN; this interaction inhibits innate immune response.

The protein localises to the host cell membrane. Its subcellular location is the host Golgi apparatus. Plays a role in the inhibition of host innate immune response. Interacts with host OPTN and thus inhibits the recruitment of TBK1 to the host Golgi apparatus. In turn, downstream partner IRF3 cannot be activated and IFN-beta production is impaired. In terms of biological role, facilitates viral particle release either by increasing plasma membrane permeability through a viroporin-like activity or by viral budding. In Bluetongue virus 1 (isolate Australia) (BTV 1), this protein is Non-structural protein P8 (Segment-10).